A 747-amino-acid polypeptide reads, in one-letter code: Elastin (747 aa).

The first 26 residues, 1 to 26 (MRSLTAAARRPEVLLLLLCILQPSQP), serve as a signal peptide directing secretion. Proline 34, proline 65, and proline 87 each carry 4-hydroxyproline. Residues lysine 105 and lysine 109 each carry the allysine modification. 4-hydroxyproline is present on residues proline 165, proline 178, and proline 181. The residue at position 188 (proline 188) is a Hydroxyproline. Proline 201 carries the post-translational modification 4-hydroxyproline. Residues lysine 252, lysine 271, and lysine 275 each carry the allysine modification. 4-hydroxyproline occurs at positions 298 and 302. An allysine mark is found at lysine 324 and lysine 327. 4-hydroxyproline is present on residues proline 335, proline 365, proline 370, proline 375, proline 380, and proline 385. Residues lysine 400, lysine 404, lysine 407, lysine 445, and lysine 448 each carry the allysine modification. 2 positions are modified to 4-hydroxyproline: proline 462 and proline 478. Allysine is present on residues lysine 489 and lysine 493. Proline 513 is subject to 4-hydroxyproline. Allysine is present on residues lysine 544, lysine 548, and lysine 552. 4-hydroxyproline is present on residues proline 566, proline 575, proline 584, proline 593, and proline 599. Allysine is present on residues lysine 606 and lysine 609. The residue at position 630 (proline 630) is a 4-hydroxyproline. Allysine occurs at positions 645, 649, 685, and 688. Proline 719 and proline 733 each carry 4-hydroxyproline. The cysteines at positions 737 and 742 are disulfide-linked.

It belongs to the elastin family. In terms of assembly, the polymeric elastin chains are cross-linked together into an extensible 3D network. Forms a ternary complex with BGN and MFAP2. Interacts with MFAP2 via divalent cations (calcium &gt; magnesium &gt; manganese) in a dose-dependent and saturating manner. Interacts with FBLN5 and FBN1. Forms a ternary complex with FBN1 and FBLN2 or FBLN5. Interacts with MFAP4 in a Ca (2+)-dependent manner; this interaction promotes ELN self-assembly. Interacts with EFEMP2 with moderate affinity. Post-translationally, elastin is formed through the cross-linking of its soluble precursor tropoelastin. Cross-linking is initiated through the action of lysyl oxidase on exposed lysines to form allysine. Subsequent spontaneous condensation reactions with other allysine or unmodified lysine residues result in various bi-, tri-, and tetrafunctional cross-links. The most abundant cross-links in mature elastin fibers are lysinonorleucine, allysine aldol, desmosine, and isodesmosine. Hydroxylation on proline residues within the sequence motif, GXPG, is most likely to be 4-hydroxy as this fits the requirement for 4-hydroxylation in vertebrates.

The protein localises to the secreted. The protein resides in the extracellular space. It is found in the extracellular matrix. In terms of biological role, major structural protein of tissues such as aorta and nuchal ligament, which must expand rapidly and recover completely. Molecular determinant of the late arterial morphogenesis, stabilizing arterial structure by regulating proliferation and organization of vascular smooth muscle. This chain is Elastin (ELN), found in Bos taurus (Bovine).